The following is a 303-amino-acid chain: Di/tripeptide transport system permease protein DppC (303 aa).

7 consecutive transmembrane segments (helical) span residues 33-53 (ALGG…APWV), 103-123 (LLIG…LGLL), 131-151 (AGPL…LLLA), 152-172 (VAIV…IAIV), 202-222 (AGTL…PLIV), 225-245 (TLSF…GLGV), and 267-287 (WWVV…INLM). The ABC transmembrane type-1 domain maps to 99–288 (ARLSLLIGLS…LSVLAINLMG (190 aa)).

Belongs to the binding-protein-dependent transport system permease family. OppBC subfamily. In terms of assembly, the complex is composed of two ATP-binding proteins (DppD and DppF), two transmembrane proteins (DppB and DppC) and a solute-binding protein (DppA1-A5). Five orthologous SBPs (DppA1-A5) are present in P.aeruginosa, which increases the substrate specificity of the DppBCDF transporter.

It localises to the cell inner membrane. Part of the ABC transporter DppABCDF involved in the uptake of various di/tripeptides. Is also involved in the uptake of phaseolotoxin, a toxic tripeptide inhibiting the enzyme ornithine carbamoyltransferase. Responsible for the translocation of the substrate across the membrane. The protein is Di/tripeptide transport system permease protein DppC of Pseudomonas aeruginosa (strain UCBPP-PA14).